A 790-amino-acid chain; its full sequence is Cadherin-6 (790 aa).

The signal sequence occupies residues 1–18 (MRTYRYFLLLFWVGQPYP). A propeptide spanning residues 19-53 (TFSNPLSKRTSGFPAKRKALELSANSRNELSRSKR) is cleaved from the precursor. Cadherin domains follow at residues 54–159 (SWMW…EPIF), 160–268 (TKDV…PPRF), 269–383 (PQST…PPVF), 384–486 (SKLA…DNAP), and 487–608 (EFAE…LIHP). Over 54–615 (SWMWNQFFLL…IHPTGLSTGA (562 aa)) the chain is Extracellular. An N-linked (GlcNAc...) asparagine glycan is attached at Asn255. The tract at residues 260-291 (DVNDNPPRFPQSTYQFKTPESSPPGTPIGRIK) is disordered. The span at 269-279 (PQSTYQFKTPE) shows a compositional bias: polar residues. N-linked (GlcNAc...) asparagine glycosylation is found at Asn399, Asn437, Asn455, and Asn536. A helical membrane pass occupies residues 616 to 636 (LVAILLCIVILLVTVVLFAAL). Over 637–790 (RRQRKKEPLI…YGGMDSDKDS (154 aa)) the chain is Cytoplasmic. A phosphoserine mark is found at Ser786 and Ser790.

It is found in the cell membrane. In terms of biological role, cadherins are calcium-dependent cell adhesion proteins. They preferentially interact with themselves in a homophilic manner in connecting cells; cadherins may thus contribute to the sorting of heterogeneous cell types. The sequence is that of Cadherin-6 (Cdh6) from Mus musculus (Mouse).